The sequence spans 37 residues: MAGEIFGTAFLFIVLVPVGLALGAFLLKVQGVQKAEK.

Residues 5-25 (IFGTAFLFIVLVPVGLALGAF) traverse the membrane as a helical segment.

The protein belongs to the PetM family. In terms of assembly, the 4 large subunits of the cytochrome b6-f complex are cytochrome b6, subunit IV (17 kDa polypeptide, PetD), cytochrome f and the Rieske protein, while the 4 small subunits are PetG, PetL, PetM and PetN. The complex functions as a dimer.

The protein resides in the cellular thylakoid membrane. Component of the cytochrome b6-f complex, which mediates electron transfer between photosystem II (PSII) and photosystem I (PSI), cyclic electron flow around PSI, and state transitions. This is Cytochrome b6-f complex subunit 7 from Synechococcus elongatus (strain ATCC 33912 / PCC 7942 / FACHB-805) (Anacystis nidulans R2).